We begin with the raw amino-acid sequence, 362 residues long: Putative G-protein coupled receptor B0244.5 (362 aa).

Topologically, residues Met-1–Cys-47 are extracellular. Asn-7, Asn-20, and Asn-23 each carry an N-linked (GlcNAc...) asparagine glycan. The helical transmembrane segment at Ile-48–Ile-68 threads the bilayer. Residues Pro-69–Gln-81 are Cytoplasmic-facing. Residues Tyr-82 to Leu-102 traverse the membrane as a helical segment. The Extracellular segment spans residues Arg-103–Ser-125. Residues Phe-126–Val-145 traverse the membrane as a helical segment. Over Arg-146 to Lys-161 the chain is Cytoplasmic. A helical membrane pass occupies residues Phe-162–Ala-182. At Ala-183 to Ala-204 the chain is on the extracellular side. A helical membrane pass occupies residues Met-205–Val-225. The Cytoplasmic segment spans residues Thr-226–Ala-255. A helical membrane pass occupies residues Trp-256–Val-276. The Extracellular segment spans residues Asn-277–His-295. Residues Leu-296–Val-316 traverse the membrane as a helical segment. Over Asp-317–Lys-362 the chain is Cytoplasmic.

It belongs to the G-protein coupled receptor 1 family. B0244 subfamily.

Its subcellular location is the cell membrane. In Caenorhabditis elegans, this protein is Putative G-protein coupled receptor B0244.5.